Reading from the N-terminus, the 272-residue chain is 3-deoxy-manno-octulosonate cytidylyltransferase (272 aa).

The protein belongs to the KdsB family.

The protein localises to the cytoplasm. It carries out the reaction 3-deoxy-alpha-D-manno-oct-2-ulosonate + CTP = CMP-3-deoxy-beta-D-manno-octulosonate + diphosphate. It functions in the pathway nucleotide-sugar biosynthesis; CMP-3-deoxy-D-manno-octulosonate biosynthesis; CMP-3-deoxy-D-manno-octulosonate from 3-deoxy-D-manno-octulosonate and CTP: step 1/1. Its pathway is bacterial outer membrane biogenesis; lipopolysaccharide biosynthesis. Functionally, activates KDO (a required 8-carbon sugar) for incorporation into bacterial lipopolysaccharide in Gram-negative bacteria. This is 3-deoxy-manno-octulosonate cytidylyltransferase from Verminephrobacter eiseniae (strain EF01-2).